Reading from the N-terminus, the 211-residue chain is Probable chemoreceptor glutamine deamidase CheD (211 aa).

It belongs to the CheD family.

It catalyses the reaction L-glutaminyl-[protein] + H2O = L-glutamyl-[protein] + NH4(+). Functionally, probably deamidates glutamine residues to glutamate on methyl-accepting chemotaxis receptors (MCPs), playing an important role in chemotaxis. In Hahella chejuensis (strain KCTC 2396), this protein is Probable chemoreceptor glutamine deamidase CheD.